A 149-amino-acid chain; its full sequence is Histone H3-like 1 (149 aa).

A compositionally biased stretch (basic and acidic residues) spans Met1–Ala19. Residues Met1–Thr58 are disordered. Low complexity predominate over residues Arg33–Pro44.

Belongs to the histone H3 family. In terms of assembly, the nucleosome is a histone octamer containing two molecules each of H2A, H2B, H3 and H4 assembled in one H3-H4 heterotetramer and two H2A-H2B heterodimers. The octamer wraps approximately 147 bp of DNA. Pollen specific.

It localises to the nucleus. Its subcellular location is the chromosome. Functionally, core component of nucleosome. Nucleosomes wrap and compact DNA into chromatin, limiting DNA accessibility to the cellular machineries which require DNA as a template. Histones thereby play a central role in transcription regulation, DNA repair, DNA replication and chromosomal stability. DNA accessibility is regulated via a complex set of post-translational modifications of histones, also called histone code, and nucleosome remodeling. This Lilium longiflorum (Trumpet lily) protein is Histone H3-like 1 (gH3).